The chain runs to 125 residues: Ribosome-binding factor A (125 aa).

It belongs to the RbfA family. As to quaternary structure, monomer. Binds 30S ribosomal subunits, but not 50S ribosomal subunits or 70S ribosomes.

The protein resides in the cytoplasm. Functionally, one of several proteins that assist in the late maturation steps of the functional core of the 30S ribosomal subunit. Associates with free 30S ribosomal subunits (but not with 30S subunits that are part of 70S ribosomes or polysomes). Required for efficient processing of 16S rRNA. May interact with the 5'-terminal helix region of 16S rRNA. The sequence is that of Ribosome-binding factor A from Fervidobacterium nodosum (strain ATCC 35602 / DSM 5306 / Rt17-B1).